A 396-amino-acid polypeptide reads, in one-letter code: NADH-quinone oxidoreductase subunit D 1 (396 aa).

The protein belongs to the complex I 49 kDa subunit family. NDH-1 is composed of 14 different subunits. Subunits NuoB, C, D, E, F, and G constitute the peripheral sector of the complex.

The protein localises to the cell inner membrane. The catalysed reaction is a quinone + NADH + 5 H(+)(in) = a quinol + NAD(+) + 4 H(+)(out). In terms of biological role, NDH-1 shuttles electrons from NADH, via FMN and iron-sulfur (Fe-S) centers, to quinones in the respiratory chain. The immediate electron acceptor for the enzyme in this species is believed to be ubiquinone. Couples the redox reaction to proton translocation (for every two electrons transferred, four hydrogen ions are translocated across the cytoplasmic membrane), and thus conserves the redox energy in a proton gradient. The chain is NADH-quinone oxidoreductase subunit D 1 from Beijerinckia indica subsp. indica (strain ATCC 9039 / DSM 1715 / NCIMB 8712).